Consider the following 356-residue polypeptide: Phenylalanine--tRNA ligase alpha subunit (356 aa).

E258 provides a ligand contact to Mg(2+).

Belongs to the class-II aminoacyl-tRNA synthetase family. Phe-tRNA synthetase alpha subunit type 1 subfamily. Tetramer of two alpha and two beta subunits. Mg(2+) serves as cofactor.

The protein resides in the cytoplasm. It catalyses the reaction tRNA(Phe) + L-phenylalanine + ATP = L-phenylalanyl-tRNA(Phe) + AMP + diphosphate + H(+). This Macrococcus caseolyticus (strain JCSC5402) (Macrococcoides caseolyticum) protein is Phenylalanine--tRNA ligase alpha subunit.